The chain runs to 440 residues: Ribulose bisphosphate carboxylase large chain (440 aa).

Lys4 bears the N6,N6,N6-trimethyllysine mark. Residues Asn113 and Thr163 each coordinate substrate. Residue Lys165 is the Proton acceptor of the active site. Lys167 is a substrate binding site. The Mg(2+) site is built by Lys191, Asp193, and Glu194. Lys191 bears the N6-carboxylysine mark. His284 (proton acceptor) is an active-site residue. Substrate is bound by residues Arg285, His317, and Ser369.

This sequence belongs to the RuBisCO large chain family. Type I subfamily. In terms of assembly, heterohexadecamer of 8 large chains and 8 small chains; disulfide-linked. The disulfide link is formed within the large subunit homodimers. Mg(2+) serves as cofactor. Post-translationally, the disulfide bond which can form in the large chain dimeric partners within the hexadecamer appears to be associated with oxidative stress and protein turnover.

Its subcellular location is the plastid. It is found in the chloroplast. The enzyme catalyses 2 (2R)-3-phosphoglycerate + 2 H(+) = D-ribulose 1,5-bisphosphate + CO2 + H2O. It carries out the reaction D-ribulose 1,5-bisphosphate + O2 = 2-phosphoglycolate + (2R)-3-phosphoglycerate + 2 H(+). RuBisCO catalyzes two reactions: the carboxylation of D-ribulose 1,5-bisphosphate, the primary event in carbon dioxide fixation, as well as the oxidative fragmentation of the pentose substrate in the photorespiration process. Both reactions occur simultaneously and in competition at the same active site. This is Ribulose bisphosphate carboxylase large chain from Polystichum munitum (Western sword-fern).